We begin with the raw amino-acid sequence, 354 residues long: UPF0324 membrane protein BL1094 (354 aa).

A run of 10 helical transmembrane segments spans residues 12–33 (IATV…FASW), 43–65 (FGAL…SAYV), 86–108 (LLRL…TQGI), 112–129 (PIAA…YAIA), 138–160 (LAIL…LAGS), 175–197 (VTMA…IALG), 239–256 (LSRV…AIWW), 271–293 (VAFP…VPFV), 300–321 (LVDF…NVNF), and 331–353 (PMLA…AMLF).

This sequence belongs to the UPF0324 family.

Its subcellular location is the cell membrane. The chain is UPF0324 membrane protein BL1094 from Bifidobacterium longum (strain NCC 2705).